The primary structure comprises 1244 residues: Putative late blight resistance protein homolog R1A-4 (1244 aa).

2 coiled-coil regions span residues 411–434 and 526–548; these read RYSDSLAFLKNQLQVIQTEFESLQ and PRMNEEIVGFKDVIENLRNQLLN. An NB-ARC domain is found at 527 to 755; that stretch reads RMNEEIVGFK…ECWEQVANDL (229 aa). 560–567 lines the ATP pocket; the sequence is GMPGLGKT. 5 LRR repeats span residues 978–1004, 1079–1103, 1127–1150, 1153–1178, and 1213–1237; these read LWNLETLILNRRSVVHKILLPSTVWDM, PIRLEILKLYRSNAFKAIPFCISAP, LKNLEVLKLYYVEFGDHREWKVSN, FPQLKILKLEDVSLMKWIVADDAFPN, and ESVVKSAMNIQETQVEDYQNTNFKL.

It belongs to the disease resistance NB-LRR family.

It is found in the cytoplasm. It localises to the membrane. Functionally, confers resistance to late blight (Phytophthora infestans) races carrying the avirulence gene Avr1. Resistance proteins guard the plant against pathogens that contain an appropriate avirulence protein via an indirect interaction with this avirulence protein. That triggers a defense system including the hypersensitive response, which restricts the pathogen growth. This chain is Putative late blight resistance protein homolog R1A-4 (R1A-4), found in Solanum demissum (Wild potato).